Consider the following 160-residue polypeptide: Regulatory protein RecX (160 aa).

Belongs to the RecX family.

It localises to the cytoplasm. Functionally, modulates RecA activity. The protein is Regulatory protein RecX of Pelodictyon phaeoclathratiforme (strain DSM 5477 / BU-1).